The primary structure comprises 700 residues: Polyphosphate kinase (700 aa).

ATP is bound at residue Asn-45. Positions 373 and 403 each coordinate Mg(2+). A PLD phosphodiesterase 1 domain is found at 428 to 462; it reads PGMKIHAKLLLITRREEQGFVRYAHIGTGNFHERT. The active-site Phosphohistidine intermediate is the His-433. ATP contacts are provided by Tyr-466, Arg-562, and His-590. Residues 585–615 enclose the PLD phosphodiesterase 2 domain; sequence DRFLEHPRVLVVHNDGDPQVFISSADWMERN.

It belongs to the polyphosphate kinase 1 (PPK1) family. Mg(2+) is required as a cofactor. In terms of processing, an intermediate of this reaction is the autophosphorylated ppk in which a phosphate is covalently linked to a histidine residue through a N-P bond.

It catalyses the reaction [phosphate](n) + ATP = [phosphate](n+1) + ADP. Catalyzes the reversible transfer of the terminal phosphate of ATP to form a long-chain polyphosphate (polyP). In Vibrio vulnificus (strain YJ016), this protein is Polyphosphate kinase.